The chain runs to 130 residues: Gloverin (130 aa).

Hemolymph.

Its subcellular location is the secreted. Functionally, antibacterial protein active against Gram-negative bacteria. The protein is Gloverin of Hyalophora cecropia (Cecropia moth).